Reading from the N-terminus, the 613-residue chain is MSKIIGIDLGTSNSAAAVVISGKPTVIPSSEGVSIGGKAFPSYVAFTKDGQMLVGEPARRQALLNPEGTIFAAKRKMGTDYKFKVFDKEFTPQQISAFILQKIKKDAEAFLGEPVNEAVITVPAYFNDNQRQATKDAGTIAGFDVKRIINEPTAAALAYGVDKSGKSEKILVFDLGGGTLDVTIIEISKRPNVQVLSTSGDTQLGGTDMDEAIVNYIADDFQKKEGIDLRKDRGAYIRLRDAAEKAKIELSTTLSSDIDLPYITVTSSGPKHIKMTLTRAKLEELISPIVERVKAPIDKALEGAKLKKTDITKLLFVGGPTRIPYVRKYVEDYLGIKAEGGVDPMEAVAIGAAIQGAVLKGEIKDIVLLDVTPLTLSVETLGGIATPIIPANTTIPVRKSQVFTTAEDMQTTVTIHVVQGERPLAKDNVSLGMFNLTGIAPAPRGIPQIEVTFDIDSNGILNVTAVDKATGKKQGITITASTKLSKDEIERMKKEAEQYAEQDRKMKEQIETLNNAESLAYSVEKTLNEAGDKVDKETKDRILSEVKDLRKAIEEKNMDNVKTLMEKISKDIQEVGTKMYQSASSTTQTGSGNQNSSKQENDKTVDAEYKEKS.

The disordered stretch occupies residues 579-613; the sequence is MYQSASSTTQTGSGNQNSSKQENDKTVDAEYKEKS. Residues 581–597 are compositionally biased toward low complexity; it reads QSASSTTQTGSGNQNSS. The span at 599-613 shows a compositional bias: basic and acidic residues; sequence QENDKTVDAEYKEKS.

Belongs to the heat shock protein 70 family.

Acts as a chaperone. This Thermoplasma volcanium (strain ATCC 51530 / DSM 4299 / JCM 9571 / NBRC 15438 / GSS1) protein is Chaperone protein DnaK.